We begin with the raw amino-acid sequence, 442 residues long: Putative arsenical pump membrane protein (442 aa).

The next 11 helical transmembrane spans lie at 22 to 42 (IPATFGALMVLLCGSVSLADL), 56 to 76 (ILATMIMAIALESFGFFYWVA), 85 to 105 (GSGIKLFWLTNLLCFLMTIFL), 107 to 127 (NDGSILITTPILLLVLKYLGL), 136 to 156 (LLSGVLIATASSAPIGVSNIV), 174 to 194 (MMFVPSMMGLIFMTCLLFMFF), 250 to 270 (LFAASYTGISVPLVAVIGSFI), 294 to 314 (IFIFAFTMYVLIYGLHNIGFT), 328 to 347 (SLAHATFASGISTSVFSNLF), 378 to 398 (IIGSDIGSLLLPMGTLATLIW), and 419 to 439 (IIIIPLTVLFTLTCLYFWISW).

It belongs to the ArsB family.

The protein localises to the cell membrane. The protein is Putative arsenical pump membrane protein (ywrK) of Bacillus subtilis (strain 168).